Here is a 144-residue protein sequence, read N- to C-terminus: Large ribosomal subunit protein uL15 (144 aa).

Residues 1–60 form a disordered region; sequence MRLNSLRPAAGSRPDANRVGRGAGTGNGKTAGRGHKGQHSRSGGFTKVGFEGGQMPLQRR. The span at 21-31 shows a compositional bias: gly residues; the sequence is RGAGTGNGKTA.

Belongs to the universal ribosomal protein uL15 family. In terms of assembly, part of the 50S ribosomal subunit.

In terms of biological role, binds to the 23S rRNA. The polypeptide is Large ribosomal subunit protein uL15 (Alkalilimnicola ehrlichii (strain ATCC BAA-1101 / DSM 17681 / MLHE-1)).